The following is a 120-amino-acid chain: Large ribosomal subunit protein uL24 (120 aa).

The tract at residues 1–26 (MVRVISSQPRKQRKARYNAPHHMRGS) is disordered. The span at 10-24 (RKQRKARYNAPHHMR) shows a compositional bias: basic residues.

This sequence belongs to the universal ribosomal protein uL24 family. As to quaternary structure, part of the 50S ribosomal subunit.

Functionally, one of two assembly initiator proteins, it binds directly to the 5'-end of the 23S rRNA, where it nucleates assembly of the 50S subunit. Located at the polypeptide exit tunnel on the outside of the subunit. The protein is Large ribosomal subunit protein uL24 of Methanospirillum hungatei JF-1 (strain ATCC 27890 / DSM 864 / NBRC 100397 / JF-1).